A 572-amino-acid chain; its full sequence is Urease subunit alpha (572 aa).

One can recognise a Urease domain in the interval 134-572 (AGIDSHIHLI…ASMNQRYFFG (439 aa)). The Ni(2+) site is built by His139, His141, and Lys222. Lys222 bears the N6-carboxylysine mark. His224 is a binding site for substrate. His251 and His277 together coordinate Ni(2+). The active-site Proton donor is His325. Position 365 (Asp365) interacts with Ni(2+).

This sequence belongs to the metallo-dependent hydrolases superfamily. Urease alpha subunit family. Heterotrimer of UreA (gamma), UreB (beta) and UreC (alpha) subunits. Three heterotrimers associate to form the active enzyme. Ni cation serves as cofactor. In terms of processing, carboxylation allows a single lysine to coordinate two nickel ions.

Its subcellular location is the cytoplasm. The enzyme catalyses urea + 2 H2O + H(+) = hydrogencarbonate + 2 NH4(+). The protein operates within nitrogen metabolism; urea degradation; CO(2) and NH(3) from urea (urease route): step 1/1. The protein is Urease subunit alpha of Yersinia pseudotuberculosis serotype O:1b (strain IP 31758).